Here is a 291-residue protein sequence, read N- to C-terminus: G1/S-specific cyclin-D1 (291 aa).

Residue Thr282 is modified to Phosphothreonine.

The protein belongs to the cyclin family. Cyclin D subfamily. Interacts with the cdk4 and cdk6 protein kinases to form a serine/threonine kinase holoenzyme complex. The cyclin subunit imparts substrate specificity to the complex. In terms of processing, phosphorylation at Thr-282 by MAP kinases is required for ubiquitination and degradation by the DCX(AMBRA1) complex. Post-translationally, ubiquitinated by the DCX(AMBRA1) complex during the transition from G1 to S cell phase, leading to its degradation. The DCX(AMBRA1) complex represents the major regulator of CCND1 stability during the G1/S transition.

It is found in the nucleus. Its subcellular location is the cytoplasm. In terms of biological role, regulatory component of the cyclin D1-CDK4 (DC) complex that phosphorylates and inhibits members of the retinoblastoma (RB) protein family including RB1 and regulates the cell-cycle during G(1)/S transition. Phosphorylation of RB1 allows dissociation of the transcription factor E2F from the RB/E2F complex and the subsequent transcription of E2F target genes which are responsible for the progression through the G(1) phase. Hypophosphorylates RB1 in early G(1) phase. Cyclin D-CDK4 complexes are major integrators of various mitogenenic and antimitogenic signals. In Xenopus laevis (African clawed frog), this protein is G1/S-specific cyclin-D1 (ccnd1).